Here is a 913-residue protein sequence, read N- to C-terminus: Bifunctional uridylyltransferase/uridylyl-removing enzyme (913 aa).

Positions 1-358 (MFNCDVTAID…PDEERPKKQP (358 aa)) are uridylyltransferase. The segment at 359–729 (INARFNQVGD…EHRELALDAV (371 aa)) is uridylyl-removing. Residues 476 to 592 (VDAHTLFLIR…TLFADLVGNV (117 aa)) form the HD domain. 2 ACT domains span residues 730 to 815 (QVFV…RIPR) and 838 to 913 (IMSL…NDRV).

This sequence belongs to the GlnD family. Requires Mg(2+) as cofactor.

The enzyme catalyses [protein-PII]-L-tyrosine + UTP = [protein-PII]-uridylyl-L-tyrosine + diphosphate. The catalysed reaction is [protein-PII]-uridylyl-L-tyrosine + H2O = [protein-PII]-L-tyrosine + UMP + H(+). With respect to regulation, uridylyltransferase (UTase) activity is inhibited by glutamine, while glutamine activates uridylyl-removing (UR) activity. In terms of biological role, modifies, by uridylylation and deuridylylation, the PII regulatory proteins (GlnB and homologs), in response to the nitrogen status of the cell that GlnD senses through the glutamine level. Under low glutamine levels, catalyzes the conversion of the PII proteins and UTP to PII-UMP and PPi, while under higher glutamine levels, GlnD hydrolyzes PII-UMP to PII and UMP (deuridylylation). Thus, controls uridylylation state and activity of the PII proteins, and plays an important role in the regulation of nitrogen assimilation and metabolism. In Psychrobacter cryohalolentis (strain ATCC BAA-1226 / DSM 17306 / VKM B-2378 / K5), this protein is Bifunctional uridylyltransferase/uridylyl-removing enzyme.